Here is a 107-residue protein sequence, read N- to C-terminus: Parvalbumin beta (107 aa).

The residue at position 1 (serine 1) is an N-acetylserine. EF-hand domains follow at residues lysine 37–serine 72 and leucine 76–alanine 107. The Ca(2+) site is built by aspartate 50, aspartate 52, serine 54, phenylalanine 56, glutamate 58, glutamate 61, aspartate 89, aspartate 91, aspartate 93, methionine 95, and glutamate 100.

It belongs to the parvalbumin family.

In terms of biological role, in muscle, parvalbumin is thought to be involved in relaxation after contraction. It binds two calcium ions. This is Parvalbumin beta from Esox lucius (Northern pike).